Consider the following 187-residue polypeptide: Meiotically up-regulated gene 155 protein (187 aa).

The segment at 1 to 24 (MRPTSGCSKDDTIQKQNRRHNTVD) is disordered. 2 helical membrane passes run 83 to 105 (IISYHFISFHTIVVLLLLPPFSH) and 163 to 183 (VMLTKPKQFLFLLEFITLFIF).

The protein localises to the cytoplasm. It localises to the nucleus membrane. Has a role in meiosis. This Schizosaccharomyces pombe (strain 972 / ATCC 24843) (Fission yeast) protein is Meiotically up-regulated gene 155 protein (mug155).